A 497-amino-acid chain; its full sequence is Cysteine--tRNA ligase (497 aa).

Cys-34 is a Zn(2+) binding site. The short motif at 36–46 (PTVYDFAHIGN) is the 'HIGH' region element. Positions 243, 268, and 272 each coordinate Zn(2+). The 'KMSKS' region signature appears at 301–305 (KMAKS). ATP is bound at residue Lys-304. The interval 478–497 (LMDYKDPETGERRTKWEVKR) is disordered. A compositionally biased stretch (basic and acidic residues) spans 480–497 (DYKDPETGERRTKWEVKR).

The protein belongs to the class-I aminoacyl-tRNA synthetase family. In terms of assembly, monomer. It depends on Zn(2+) as a cofactor.

The protein localises to the cytoplasm. It carries out the reaction tRNA(Cys) + L-cysteine + ATP = L-cysteinyl-tRNA(Cys) + AMP + diphosphate. This is Cysteine--tRNA ligase from Chelativorans sp. (strain BNC1).